We begin with the raw amino-acid sequence, 375 residues long: MMEDDGQPRTLYVGNLSRDVTEVLILQLFSQIGPCKSCKMITEHTSNDPYCFVEFYEHRDAAAALAAMNGRKILGKEVKVNWATTPSSQKKDTSNHFHVFVGDLSPEITTEDIKSAFAPFGKISDARVVKDMATGKSKGYGFVSFYNKLDAENAIVHMGGQWLGGRQIRTNWATRKPPAPKSTQENNTKQLRFEDVVNQSSPKNCTVYCGGIASGLTDQLMRQTFSPFGQIMEIRVFPEKGYSFVRFSTHESAAHAIVSVNGTTIEGHVVKCYWGKESPDMTKNFQQVDYSQWGQWSQVYGNPQQYGQYMANGWQVPPYGVYGQPWNQQGFGVDQSPSAAWMGGFGAQPPQGQAPPPVIPPPNQAGYGMASYQTQ.

RRM domains are found at residues 9–85 (RTLY…WATT) and 97–175 (FHVF…WATR). At Lys122 the chain carries N6-acetyllysine. The residue at position 201 (Ser201) is a Phosphoserine. Residues 205 to 277 (CTVYCGGIAS…HVVKCYWGKE (73 aa)) enclose the RRM 3 domain. The interval 345–375 (FGAQPPQGQAPPPVIPPPNQAGYGMASYQTQ) is disordered. Positions 352–363 (GQAPPPVIPPPN) are enriched in pro residues.

As to quaternary structure, interacts with FASTK. Post-translationally, phosphorylated by MAPK14 following DNA damage, releasing TIAR from GADD45A mRNA. In terms of tissue distribution, expressed in brain, heart, kidney, lung and skeletal muscle.

It is found in the nucleus. The protein localises to the cytoplasm. It localises to the cytolytic granule. Its subcellular location is the stress granule. Functionally, RNA-binding protein involved in alternative pre-RNA splicing and in cytoplasmic stress granules formation. Shows a preference for uridine-rich RNAs. Activates splicing of alternative exons with weak 5' splice sites followed by a U-rich stretch on its own pre-mRNA and on TIA1 mRNA. Promotes the inclusion of TIA1 exon 5 to give rise to the long isoform (isoform a) of TIA1. Acts downstream of the stress-induced phosphorylation of EIF2S1/EIF2A to promote the recruitment of untranslated mRNAs to cytoplasmic stress granules (SG). Possesses nucleolytic activity against cytotoxic lymphocyte target cells. May be involved in apoptosis. The sequence is that of Nucleolysin TIAR (TIAL1) from Homo sapiens (Human).